A 456-amino-acid polypeptide reads, in one-letter code: Kynurenine 3-monooxygenase (456 aa).

It belongs to the aromatic-ring hydroxylase family. KMO subfamily. Requires FAD as cofactor.

The catalysed reaction is L-kynurenine + NADPH + O2 + H(+) = 3-hydroxy-L-kynurenine + NADP(+) + H2O. Its pathway is cofactor biosynthesis; NAD(+) biosynthesis; quinolinate from L-kynurenine: step 1/3. Its function is as follows. Catalyzes the hydroxylation of L-kynurenine (L-Kyn) to form 3-hydroxy-L-kynurenine (L-3OHKyn). Required for synthesis of quinolinic acid. This chain is Kynurenine 3-monooxygenase, found in Xanthomonas campestris pv. campestris (strain B100).